A 350-amino-acid polypeptide reads, in one-letter code: Arabinogalactan endo-beta-1,4-galactanase A (350 aa).

An N-terminal signal peptide occupies residues 1–16 (MIYPLLLSALPLLSSA). N-linked (GlcNAc...) asparagine glycosylation is present at Asn-128. The Proton donor role is filled by Glu-152. Glu-262 functions as the Nucleophile in the catalytic mechanism.

It belongs to the glycosyl hydrolase 53 family.

It localises to the secreted. The enzyme catalyses The enzyme specifically hydrolyzes (1-&gt;4)-beta-D-galactosidic linkages in type I arabinogalactans.. In terms of biological role, endogalactanase involved in the degradation of plant cell wall polysaccharides, and more particularly of hairy regions of pectin. In Aspergillus niger, this protein is Arabinogalactan endo-beta-1,4-galactanase A (galA).